A 108-amino-acid polypeptide reads, in one-letter code: ATP synthase epsilon chain (108 aa).

The protein belongs to the ATPase epsilon chain family. In terms of assembly, F-type ATPases have 2 components, CF(1) - the catalytic core - and CF(0) - the membrane proton channel. CF(1) has five subunits: alpha(3), beta(3), gamma(1), delta(1), epsilon(1). CF(0) has three main subunits: a, b and c.

The protein localises to the cell inner membrane. Its function is as follows. Produces ATP from ADP in the presence of a proton gradient across the membrane. This Thermotoga maritima (strain ATCC 43589 / DSM 3109 / JCM 10099 / NBRC 100826 / MSB8) protein is ATP synthase epsilon chain.